Consider the following 440-residue polypeptide: Thymidine phosphorylase (440 aa).

Belongs to the thymidine/pyrimidine-nucleoside phosphorylase family. In terms of assembly, homodimer.

The catalysed reaction is thymidine + phosphate = 2-deoxy-alpha-D-ribose 1-phosphate + thymine. It functions in the pathway pyrimidine metabolism; dTMP biosynthesis via salvage pathway; dTMP from thymine: step 1/2. The enzymes which catalyze the reversible phosphorolysis of pyrimidine nucleosides are involved in the degradation of these compounds and in their utilization as carbon and energy sources, or in the rescue of pyrimidine bases for nucleotide synthesis. The polypeptide is Thymidine phosphorylase (Salmonella arizonae (strain ATCC BAA-731 / CDC346-86 / RSK2980)).